Reading from the N-terminus, the 236-residue chain is Uridylate kinase (236 aa).

10–13 (KLSG) lines the ATP pocket. Gly52 contributes to the UMP binding site. Gly53 and Arg57 together coordinate ATP. Residues Asp72 and 133–140 (TGNPFFTT) each bind UMP. Residues Thr160, Tyr166, and Asp169 each coordinate ATP.

This sequence belongs to the UMP kinase family. In terms of assembly, homohexamer.

It localises to the cytoplasm. The enzyme catalyses UMP + ATP = UDP + ADP. The protein operates within pyrimidine metabolism; CTP biosynthesis via de novo pathway; UDP from UMP (UMPK route): step 1/1. Inhibited by UTP. Its function is as follows. Catalyzes the reversible phosphorylation of UMP to UDP. The protein is Uridylate kinase of Phocaeicola vulgatus (strain ATCC 8482 / DSM 1447 / JCM 5826 / CCUG 4940 / NBRC 14291 / NCTC 11154) (Bacteroides vulgatus).